A 1688-amino-acid chain; its full sequence is Voltage-dependent L-type calcium channel subunit alpha-1S (1688 aa).

A disordered region spans residues 1 to 24; sequence MDAMGSAAEEGTQKKKRRPLVPPP. The Cytoplasmic portion of the chain corresponds to 1 to 51; the sequence is MDAMGSAAEEGTQKKKRRPLVPPPPRPPRALFCLGLQNPFRKFCINIVEWK. The stretch at 38–335 is one I repeat; that stretch reads NPFRKFCINI…LVLGVLSGEF (298 aa). A helical transmembrane segment spans residues 52–70; sequence PFEMIILLTIFANCVALAI. Residues 71–88 lie on the Extracellular side of the membrane; it reads FLPMPEDDTNSTNSVLEK. The N-linked (GlcNAc...) asparagine glycan is linked to asparagine 80. Residues 89–108 form a helical membrane-spanning segment; it reads VEYIFLFIFTIESFLKIVAY. Over 109–120 the chain is Cytoplasmic; the sequence is GFILHTDAYLRN. Residues 121–139 form a helical membrane-spanning segment; sequence GWNILDFTIVSVGVFSVLL. Over 140 to 158 the chain is Extracellular; that stretch reads EQISKLQGLPAPGKSSGFN. Residues 159–177 form a helical membrane-spanning segment; the sequence is VKALRAFRVLRPLRLVSGV. At 178–196 the chain is on the cytoplasmic side; sequence PSLQVVLNSIIKAMIPLLH. The helical transmembrane segment at 197–216 threads the bilayer; that stretch reads IALLVLFMIIIYAIVGLELF. At 217-307 the chain is on the extracellular side; it reads SGKMHKTCYF…WVNDAIGNEW (91 aa). Asparagine 255 carries N-linked (GlcNAc...) asparagine glycosylation. Residue glutamate 290 participates in Ca(2+) binding. The chain crosses the membrane as a helical span at residues 308-332; it reads PWIYFVSLILLGSFFVLNLVLGVLS. Residues 333 to 431 are Cytoplasmic-facing; that stretch reads GEFTKEREKA…RKSRDLVKSR (99 aa). The segment at 355–372 is binding to the beta subunit; sequence QAMDEDLRGYLDWITHAE. One copy of the II repeat lies at 417–663; the sequence is HRLLRRKSRD…VFLAIAVDNL (247 aa). A helical transmembrane segment spans residues 432 to 450; the sequence is FFYWLVIIIILLNTVIIAT. Residues 451 to 465 are Extracellular-facing; the sequence is EHHHQPDSLTKAQDI. The helical transmembrane segment at 466–485 threads the bilayer; the sequence is ANEVLLALFTMEMIVKIYAL. Residues 486 to 493 are Cytoplasmic-facing; sequence GFQSYFMS. The helical transmembrane segment at 494–512 threads the bilayer; the sequence is LFNRFDSFVVCTGLLEVML. Over 513–522 the chain is Extracellular; it reads VASDIMSPLG. Residues 523–541 traverse the membrane as a helical segment; the sequence is ISVLRCIRLLRIFKITRYW. At 542–560 the chain is on the cytoplasmic side; that stretch reads TSLNNLVASLLNSVRSIAS. Residues 561–580 traverse the membrane as a helical segment; sequence LLLLLFLFMIIFALLGMQMF. At 581–635 the chain is on the extracellular side; sequence GGKFDFEDLEVRRSTFDTFPQALITVFQILTGEDWTAVMYNGIMAYGGPTYSGMS. Glutamate 613 is a binding site for Ca(2+). Residues 636–660 traverse the membrane as a helical segment; sequence VCIYFIILFVCGNYILLNVFLAIAV. Residues 661-797 lie on the Cytoplasmic side of the membrane; sequence DNLAEAENLT…VLCHRIINAT (137 aa). Disordered regions lie at residues 672-696 and 729-755; these read AQKA…TEEE and EIKD…ISPR. The span at 740-749 shows a compositional bias: acidic residues; sequence PGDDEEEEPE. An III repeat occupies 784 to 1066; sequence NKIRVLCHRI…IFVGFVIVTF (283 aa). A helical transmembrane segment spans residues 798-816; the sequence is TFTNFILLFILLSSISLAA. The Extracellular portion of the chain corresponds to 817 to 832; it reads EDPIQPESFRNKVLSK. Residues 833–852 traverse the membrane as a helical segment; it reads LDIVFTVIFTTEIVLKMTAY. The Cytoplasmic portion of the chain corresponds to 853–864; sequence GAFLHKGSFCRN. A helical membrane pass occupies residues 865 to 883; the sequence is SFNILDLSVVGVSLISMGI. Topologically, residues 884 to 890 are extracellular; it reads ESSAISV. A helical membrane pass occupies residues 891 to 909; sequence VKILRVLRVLRPLRAINRA. Residues 910–928 lie on the Cytoplasmic side of the membrane; sequence KGLKHVVQCLFVAIKTIGN. A helical transmembrane segment spans residues 929-948; the sequence is IVLVTTLLQFMFSCIGVQLF. Residues 949–1038 lie on the Extracellular side of the membrane; sequence KGKFYSCTDT…MGPIYNYRIE (90 aa). A dihydropyridine binding region spans residues 986–1075; it reads RVWSHSDFHF…FQEQGEQEYK (90 aa). Glutamate 1012 provides a ligand contact to Ca(2+). A helical membrane pass occupies residues 1039–1063; it reads IAVFFIVYIILIAFFMMNIFVGFVI. Over 1064 to 1116 the chain is Cytoplasmic; that stretch reads VTFQEQGEQEYKDCELDKNQRQCVQYALKARPLRRYIPKNPHQYKIWYVVTSS. An IV repeat occupies 1103–1371; that stretch reads NPHQYKIWYV…LFVAVIMDNF (269 aa). Residues 1117–1135 form a helical membrane-spanning segment; the sequence is YFEYLMFFLITLNTISLGM. The Extracellular segment spans residues 1136–1150; that stretch reads QHYGQTAEFSYMSDI. A helical membrane pass occupies residues 1151 to 1170; that stretch reads LNVAFTGIFTVEMFLKLAAF. The Cytoplasmic segment spans residues 1171-1178; the sequence is KAKGYFGD. A helical membrane pass occupies residues 1179–1197; sequence PWNVFDFLIVIGSVIDVIL. The Extracellular portion of the chain corresponds to 1198 to 1218; sequence SEIDTPGIPATPGAEESSRIS. A helical transmembrane segment spans residues 1219–1237; it reads ITFFRLFRVLRLVKLLSRG. The Cytoplasmic portion of the chain corresponds to 1238–1256; the sequence is EGVRTLLWTFIKSFQALPY. The helical transmembrane segment at 1257–1276 threads the bilayer; sequence VALLIVMLFFIYAVIGMQVF. Residues 1277 to 1343 lie on the Extracellular side of the membrane; the sequence is GKIALVDGTH…GEEYTCGTSF (67 aa). A dihydropyridine binding region spans residues 1324–1390; the sequence is LCDPMSDFQP…LGPHHLDEFK (67 aa). Residues 1336–1379 form a phenylalkylamine binding region; it reads EYTCGTSFAYFYFISFYMLCAFLIINLFVAVIMDNFDYLTRDWS. Residues 1344–1368 traverse the membrane as a helical segment; it reads AYFYFISFYMLCAFLIINLFVAVIM. Residues 1369–1688 are Cytoplasmic-facing; that stretch reads DNFDYLTRDW…TNSSISQATN (320 aa). 2 disordered regions span residues 1635-1664 and 1669-1688; these read PEPV…RLTT and RVQQ…QATN. The segment covering 1678–1688 has biased composition (polar residues); it reads DTNSSISQATN.

It belongs to the calcium channel alpha-1 subunit (TC 1.A.1.11) family. In terms of assembly, multisubunit complex consisting of alpha-1, alpha-2, beta and delta subunits in a 1:1:1:1 ratio. The channel activity is directed by the pore-forming and voltage-sensitive alpha-1 subunit. In many cases, this subunit is sufficient to generate voltage-sensitive calcium channel activity. The auxiliary subunits beta and alpha-2/delta linked by a disulfide bridge regulate the channel activity. An additional gamma subunit is present only in skeletal muscle L-type channel. In terms of processing, phosphorylation by PKA stimulates the calcium channel function. As to expression, skeletal muscle specific.

It is found in the membrane. In terms of biological role, voltage-sensitive calcium channels (VSCC) mediate the entry of calcium ions into excitable cells and are also involved in a variety of calcium-dependent processes, including muscle contraction, gene expression, cell motility, cell division and cell death. The isoform alpha-1S gives rise to L-type calcium currents. Long-lasting (L-type) calcium channels belong to the 'high-voltage activated' (HVA) group. They are blocked by dihydropyridines (DHP), phenylalkylamines, and by benzothiazepines. Calcium channels containing the alpha-1S subunit play an important role in excitation-contraction coupling in skele|tal muscle. This is Voltage-dependent L-type calcium channel subunit alpha-1S from Aquarana catesbeiana (American bullfrog).